A 150-amino-acid chain; its full sequence is MRVVIQRVSHASVTIDGHCKSAIQKGMMILVGIEETDSREDIDWLCKKIVNLRIFDDENGVMNKSILEDEGNILVISQFTLHASTKKGNRPSYIKAAKPEISIPLYEQFCKDLSCALGKEVKTGEFGADMKVELLNDGPVTICIDTKNKE.

A Gly-cisPro motif, important for rejection of L-amino acids motif is present at residues Gly138–Pro139.

The protein belongs to the DTD family. In terms of assembly, homodimer.

The protein resides in the cytoplasm. It catalyses the reaction glycyl-tRNA(Ala) + H2O = tRNA(Ala) + glycine + H(+). The enzyme catalyses a D-aminoacyl-tRNA + H2O = a tRNA + a D-alpha-amino acid + H(+). An aminoacyl-tRNA editing enzyme that deacylates mischarged D-aminoacyl-tRNAs. Also deacylates mischarged glycyl-tRNA(Ala), protecting cells against glycine mischarging by AlaRS. Acts via tRNA-based rather than protein-based catalysis; rejects L-amino acids rather than detecting D-amino acids in the active site. By recycling D-aminoacyl-tRNA to D-amino acids and free tRNA molecules, this enzyme counteracts the toxicity associated with the formation of D-aminoacyl-tRNA entities in vivo and helps enforce protein L-homochirality. This chain is D-aminoacyl-tRNA deacylase, found in Bacteroides fragilis (strain YCH46).